A 447-amino-acid polypeptide reads, in one-letter code: Tubulin beta-1 chain (447 aa).

Residues Q11, E69, S138, G142, T143, G144, N204, and N226 each coordinate GTP. Mg(2+) is bound at residue E69.

Belongs to the tubulin family. Dimer of alpha and beta chains. A typical microtubule is a hollow water-filled tube with an outer diameter of 25 nm and an inner diameter of 15 nM. Alpha-beta heterodimers associate head-to-tail to form protofilaments running lengthwise along the microtubule wall with the beta-tubulin subunit facing the microtubule plus end conferring a structural polarity. Microtubules usually have 13 protofilaments but different protofilament numbers can be found in some organisms and specialized cells. Mg(2+) serves as cofactor.

The protein resides in the cytoplasm. The protein localises to the cytoskeleton. Functionally, tubulin is the major constituent of microtubules, a cylinder consisting of laterally associated linear protofilaments composed of alpha- and beta-tubulin heterodimers. Microtubules grow by the addition of GTP-tubulin dimers to the microtubule end, where a stabilizing cap forms. Below the cap, tubulin dimers are in GDP-bound state, owing to GTPase activity of alpha-tubulin. In Geotrichum candidum (Oospora lactis), this protein is Tubulin beta-1 chain.